Reading from the N-terminus, the 310-residue chain is Upstream stimulatory factor 1 (310 aa).

The segment covering 1–17 (MKGQQKTAETEEGTVQI) has biased composition (polar residues). Disordered regions lie at residues 1 to 26 (MKGQQKTAETEEGTVQIQEGAVATGE) and 171 to 209 (QGGSQRSIAPRTHPYSPKSEAPRTTRDEKRRAQHNEVER). The span at 190–209 (EAPRTTRDEKRRAQHNEVER) shows a compositional bias: basic and acidic residues. The bHLH domain occupies 199-254 (KRRAQHNEVERRRRDKINNWIVQLSKIIPDCSMESTKSGQSKGGILSKACDYIQEL). Positions 271 to 292 (LQLDNDVLRQQVEDLKNKNLLL) are leucine-zipper. Residue Lys306 forms a Glycyl lysine isopeptide (Lys-Gly) (interchain with G-Cter in SUMO2) linkage.

In terms of assembly, efficient DNA binding requires dimerization with another bHLH protein. Binds DNA as a homodimer or a heterodimer (USF1/USF2).

The protein localises to the nucleus. Transcription factor that binds to a symmetrical DNA sequence (E-boxes) (5'-CACGTG-3') that is found in a variety of viral and cellular promoters. This is Upstream stimulatory factor 1 (USF1) from Bos taurus (Bovine).